The chain runs to 123 residues: Small ribosomal subunit protein uS12 (123 aa).

At D89 the chain carries 3-methylthioaspartic acid.

The protein belongs to the universal ribosomal protein uS12 family. Part of the 30S ribosomal subunit. Contacts proteins S8 and S17. May interact with IF1 in the 30S initiation complex.

In terms of biological role, with S4 and S5 plays an important role in translational accuracy. Interacts with and stabilizes bases of the 16S rRNA that are involved in tRNA selection in the A site and with the mRNA backbone. Located at the interface of the 30S and 50S subunits, it traverses the body of the 30S subunit contacting proteins on the other side and probably holding the rRNA structure together. The combined cluster of proteins S8, S12 and S17 appears to hold together the shoulder and platform of the 30S subunit. The polypeptide is Small ribosomal subunit protein uS12 (Anaeromyxobacter dehalogenans (strain 2CP-1 / ATCC BAA-258)).